The primary structure comprises 843 residues: Complement component C7 (843 aa).

The N-terminal stretch at 1–22 (MKVISLFILVGFIGEFQSFSSA) is a signal peptide. The TSP type-1 1 domain occupies 27–80 (NCQWDFYAPWSECNGCTKTQTRRRSVAVYGQYGGQPCVGNAFETQSCEPTRGCP). 7 disulfide bridges follow: C28/C63, C39/C73, C42/C79, C85/C96, C91/C109, C103/C119, and C128/C165. Residue W36 is glycosylated (C-linked (Man) tryptophan). One can recognise an LDL-receptor class A domain in the interval 83–121 (EGCGERFRCFSGQCISKSLVCNGDSDCDEDSADEDRCED). The segment covering 108-120 (DCDEDSADEDRCE) has biased composition (acidic residues). The segment at 108 to 143 (DCDEDSADEDRCEDSERRPSCDIDKPPPNIELTGNG) is disordered. A compositionally biased stretch (basic and acidic residues) spans 121–132 (DSERRPSCDIDK). One can recognise an MACPF domain in the interval 124 to 456 (RRPSCDIDKP…EYLDEFDPCH (333 aa)). An N-linked (GlcNAc...) asparagine glycan is attached at N202. The interval 219–240 (SRKRSFFRSSSSSSRSYTSHTN) is disordered. Residues 225–234 (FRSSSSSSRS) are compositionally biased toward low complexity. Cystine bridges form between C337/C353, C433/C560, C455/C505, C457/C473, C460/C475, C477/C486, C512/C545, C523/C535, C571/C613, C599/C626, C631/C673, and C659/C688. Residues 457-487 (CRPCQNGGLATVEGTHCLCHCKPYTFGAACE) form the EGF-like domain. Residues 500 to 549 (DGGWSCWSSWSPCVQGKKTRSRECNNPPPSGGGRSCVGETTESTQCEDEE) form the TSP type-1 2 domain. C-linked (Man) tryptophan; partial glycosylation is found at W503, W506, and W509. The segment at 516-538 (KKTRSRECNNPPPSGGGRSCVGE) is disordered. CCP stretches follow at residues 545-615 (CEDE…RCGE) and 616-693 (DLRW…QKEN). Sushi domains are found at residues 569–628 (EFCP…HCQK) and 629–690 (IACV…RCVQ). Factor I module (FIM) regions lie at residues 695–770 (LTQA…ASAE) and 771–843 (KACG…AETQ). O-linked (GalNAc...) threonine glycosylation occurs at T696. 9 disulfides stabilise this stretch: C702/C713, C715/C750, C721/C743, C728/C763, C773/C782, C776/C789, C791/C825, C797/C818, and C805/C838. N-linked (GlcNAc...) (complex) asparagine glycosylation is present at N754.

Belongs to the complement C6/C7/C8/C9 family. Monomer or dimer; as a C5b-7 complex it can also form multimeric rosettes. Component of the membrane attack complex (MAC), composed of complement C5b, C6, C7, C8A, C8B, C8G and multiple copies of the pore-forming subunit C9. C-, N- and O-glycosylated. O-glycosylated with core 1 or possibly core 8 glycans.

The protein localises to the secreted. It localises to the target cell membrane. Its activity is regulated as follows. Membrane attack complex (MAC) assembly is inhibited by CD59, thereby protecting self-cells from damage during complement activation. MAC assembly is also inhibited by clusterin (CLU) chaperones that inhibit polymerization of C9. Component of the membrane attack complex (MAC), a multiprotein complex activated by the complement cascade, which inserts into a target cell membrane and forms a pore, leading to target cell membrane rupture and cell lysis. The MAC is initiated by proteolytic cleavage of C5 into complement C5b in response to the classical, alternative, lectin and GZMK complement pathways. The complement pathways consist in a cascade of proteins that leads to phagocytosis and breakdown of pathogens and signaling that strengthens the adaptive immune system. C7 serves as a membrane anchor. During MAC assembly, associates with C5b and C6 to form the C5b-7 complex, a key lipophilic precursor of the MAC complex, which associates with the outer leaflet and reduces the energy for membrane bending. The protein is Complement component C7 of Homo sapiens (Human).